The following is a 408-amino-acid chain: Formate-dependent phosphoribosylglycinamide formyltransferase (408 aa).

Residues 25 to 26 and Glu-85 contribute to the N(1)-(5-phospho-beta-D-ribosyl)glycinamide site; that span reads EL. ATP-binding positions include Arg-118, Lys-159, 164–169, 199–202, and Glu-207; these read SSGKGQ and EAFV. One can recognise an ATP-grasp domain in the interval 123-318; sequence KLAAEELGLP…EFELHAKAIL (196 aa). Mg(2+)-binding residues include Glu-277 and Glu-289. N(1)-(5-phospho-beta-D-ribosyl)glycinamide contacts are provided by residues Asp-296, Lys-365, and 372–373; that span reads RR.

It belongs to the PurK/PurT family. As to quaternary structure, homodimer.

It carries out the reaction N(1)-(5-phospho-beta-D-ribosyl)glycinamide + formate + ATP = N(2)-formyl-N(1)-(5-phospho-beta-D-ribosyl)glycinamide + ADP + phosphate + H(+). It participates in purine metabolism; IMP biosynthesis via de novo pathway; N(2)-formyl-N(1)-(5-phospho-D-ribosyl)glycinamide from N(1)-(5-phospho-D-ribosyl)glycinamide (formate route): step 1/1. Involved in the de novo purine biosynthesis. Catalyzes the transfer of formate to 5-phospho-ribosyl-glycinamide (GAR), producing 5-phospho-ribosyl-N-formylglycinamide (FGAR). Formate is provided by PurU via hydrolysis of 10-formyl-tetrahydrofolate. The sequence is that of Formate-dependent phosphoribosylglycinamide formyltransferase from Corynebacterium glutamicum (strain R).